Reading from the N-terminus, the 482-residue chain is Proline--tRNA ligase (482 aa).

Belongs to the class-II aminoacyl-tRNA synthetase family. ProS type 3 subfamily. Homodimer.

It is found in the cytoplasm. The catalysed reaction is tRNA(Pro) + L-proline + ATP = L-prolyl-tRNA(Pro) + AMP + diphosphate. Functionally, catalyzes the attachment of proline to tRNA(Pro) in a two-step reaction: proline is first activated by ATP to form Pro-AMP and then transferred to the acceptor end of tRNA(Pro). This chain is Proline--tRNA ligase, found in Thermofilum pendens (strain DSM 2475 / Hrk 5).